The primary structure comprises 434 residues: Serine hydroxymethyltransferase 1 (434 aa).

(6S)-5,6,7,8-tetrahydrofolate contacts are provided by residues Leu136 and 140 to 142; that span reads GHL. Lys245 carries the N6-(pyridoxal phosphate)lysine modification.

The protein belongs to the SHMT family. As to quaternary structure, homodimer. It depends on pyridoxal 5'-phosphate as a cofactor.

The protein resides in the cytoplasm. The catalysed reaction is (6R)-5,10-methylene-5,6,7,8-tetrahydrofolate + glycine + H2O = (6S)-5,6,7,8-tetrahydrofolate + L-serine. The protein operates within one-carbon metabolism; tetrahydrofolate interconversion. It functions in the pathway amino-acid biosynthesis; glycine biosynthesis; glycine from L-serine: step 1/1. Its function is as follows. Catalyzes the reversible interconversion of serine and glycine with tetrahydrofolate (THF) serving as the one-carbon carrier. This reaction serves as the major source of one-carbon groups required for the biosynthesis of purines, thymidylate, methionine, and other important biomolecules. Also exhibits THF-independent aldolase activity toward beta-hydroxyamino acids, producing glycine and aldehydes, via a retro-aldol mechanism. This chain is Serine hydroxymethyltransferase 1, found in Rhodospirillum rubrum (strain ATCC 11170 / ATH 1.1.1 / DSM 467 / LMG 4362 / NCIMB 8255 / S1).